The sequence spans 139 residues: FAD synthase (139 aa).

ATP contacts are provided by residues Thr9–Phe10, His14–His17, and Asn92.

Belongs to the archaeal FAD synthase family. Homodimer. It depends on a divalent metal cation as a cofactor.

It catalyses the reaction FMN + ATP + H(+) = FAD + diphosphate. It participates in cofactor biosynthesis; FAD biosynthesis; FAD from FMN: step 1/1. Functionally, catalyzes the transfer of the AMP portion of ATP to flavin mononucleotide (FMN) to produce flavin adenine dinucleotide (FAD) coenzyme. This is FAD synthase from Methanocella paludicola (strain DSM 17711 / JCM 13418 / NBRC 101707 / SANAE).